A 147-amino-acid polypeptide reads, in one-letter code: Arginine repressor (147 aa).

The protein belongs to the ArgR family.

It localises to the cytoplasm. It functions in the pathway amino-acid biosynthesis; L-arginine biosynthesis [regulation]. In terms of biological role, regulates arginine biosynthesis genes. This is Arginine repressor from Chlamydia felis (strain Fe/C-56) (Chlamydophila felis).